A 118-amino-acid chain; its full sequence is Autophagy-related protein 8 (118 aa).

A lipid anchor (Phosphatidylethanolamine amidated glycine) is attached at Gly-116. The propeptide at 117–118 (SI) is removed in mature form.

This sequence belongs to the ATG8 family. As to quaternary structure, conjugation to phosphatidylethanolamine (PE) leads to homodimerization. Interacts with ATG1, ATG3, ATG4, ATG7 and ATG12. The C-terminal Ser-117 and Ile-118 residues of ATG8 are removed by ATG4 to expose Gly-116 at the C-terminus. This Gly-116 forms then a thioester bond with ATG7 (E1-like activating enzyme) before being transferred to ATG3 (the specific E2 conjugating enzyme), in order to be finally amidated with phosphatidylethanolamine. This lipid modification anchors ATG8 to membranes and can be reversed by ATG4, releasing soluble ATG8.

The protein localises to the cytoplasmic vesicle. The protein resides in the cvt vesicle membrane. Its subcellular location is the autophagosome membrane. It is found in the vacuole membrane. Functionally, ubiquitin-like modifier involved in cytoplasm to vacuole transport (Cvt) vesicles and autophagosome formation. With ATG4, mediates the delivery of the vesicles and autophagosomes to the vacuole via the microtubule cytoskeleton. Required for selective autophagic degradation of the nucleus (nucleophagy) as well as for mitophagy which contributes to regulate mitochondrial quantity and quality by eliminating the mitochondria to a basal level to fulfill cellular energy requirements and preventing excess ROS production. Also participates in membrane fusion events that take place in the early secretory pathway. Also involved in endoplasmic reticulum-specific autophagic process and is essential for the survival of cells subjected to severe ER stress. The ATG8-PE conjugate mediates tethering between adjacent membranes and stimulates membrane hemifusion, leading to expansion of the autophagosomal membrane during autophagy. Moreover not only conjugation, but also subsequent ATG8-PE deconjugation is an important step required to facilitate multiple events during macroautophagy, and especially for efficient autophagosome biogenesis, the assembly of ATG9-containing tubulovesicular clusters into phagophores/autophagosomes, and for the disassembly of PAS-associated ATG components. Contributes to conidiation by regulating the conidial levels of the conidiation-related protein CP15 and mediates fungal oxidation resistance by controlling total superoxide dismutase (SOD) activity. The protein is Autophagy-related protein 8 of Beauveria bassiana (strain ARSEF 2860) (White muscardine disease fungus).